A 206-amino-acid polypeptide reads, in one-letter code: Thiamine-phosphate synthase (206 aa).

Residues 39 to 43 and Asn-74 each bind 4-amino-2-methyl-5-(diphosphooxymethyl)pyrimidine; that span reads QYREK. Mg(2+) contacts are provided by Asp-75 and Asp-94. 4-amino-2-methyl-5-(diphosphooxymethyl)pyrimidine is bound at residue Ser-112. 138–140 is a binding site for 2-[(2R,5Z)-2-carboxy-4-methylthiazol-5(2H)-ylidene]ethyl phosphate; that stretch reads TNT. A 4-amino-2-methyl-5-(diphosphooxymethyl)pyrimidine-binding site is contributed by Lys-141. 2-[(2R,5Z)-2-carboxy-4-methylthiazol-5(2H)-ylidene]ethyl phosphate contacts are provided by residues Gly-170 and 190–191; that span reads IS.

The protein belongs to the thiamine-phosphate synthase family. The cofactor is Mg(2+).

It catalyses the reaction 2-[(2R,5Z)-2-carboxy-4-methylthiazol-5(2H)-ylidene]ethyl phosphate + 4-amino-2-methyl-5-(diphosphooxymethyl)pyrimidine + 2 H(+) = thiamine phosphate + CO2 + diphosphate. The catalysed reaction is 2-(2-carboxy-4-methylthiazol-5-yl)ethyl phosphate + 4-amino-2-methyl-5-(diphosphooxymethyl)pyrimidine + 2 H(+) = thiamine phosphate + CO2 + diphosphate. The enzyme catalyses 4-methyl-5-(2-phosphooxyethyl)-thiazole + 4-amino-2-methyl-5-(diphosphooxymethyl)pyrimidine + H(+) = thiamine phosphate + diphosphate. It participates in cofactor biosynthesis; thiamine diphosphate biosynthesis; thiamine phosphate from 4-amino-2-methyl-5-diphosphomethylpyrimidine and 4-methyl-5-(2-phosphoethyl)-thiazole: step 1/1. In terms of biological role, condenses 4-methyl-5-(beta-hydroxyethyl)thiazole monophosphate (THZ-P) and 2-methyl-4-amino-5-hydroxymethyl pyrimidine pyrophosphate (HMP-PP) to form thiamine monophosphate (TMP). The chain is Thiamine-phosphate synthase from Oceanobacillus iheyensis (strain DSM 14371 / CIP 107618 / JCM 11309 / KCTC 3954 / HTE831).